A 142-amino-acid chain; its full sequence is Cell wall-binding protein YqgA (142 aa).

The signal sequence occupies residues 1–28 (MKQGKFSVFLILLLMLTLVVAPKEKAEA).

Found in a complex with F(1)F(0) ATP synthase and SpoIIIJ and YqjG.

The protein localises to the secreted. It localises to the cell wall. This chain is Cell wall-binding protein YqgA (yqgA), found in Bacillus subtilis (strain 168).